Here is a 520-residue protein sequence, read N- to C-terminus: 2,3-bisphosphoglycerate-independent phosphoglycerate mutase (520 aa).

Residues Asp13 and Ser63 each coordinate Mn(2+). The active-site Phosphoserine intermediate is Ser63. Substrate contacts are provided by residues His124, 154 to 155 (RD), Arg192, Arg198, 268 to 271 (RADR), and Lys342. Asp409, His413, Asp450, His451, and His469 together coordinate Mn(2+).

Belongs to the BPG-independent phosphoglycerate mutase family. In terms of assembly, monomer. Requires Mn(2+) as cofactor.

The enzyme catalyses (2R)-2-phosphoglycerate = (2R)-3-phosphoglycerate. It functions in the pathway carbohydrate degradation; glycolysis; pyruvate from D-glyceraldehyde 3-phosphate: step 3/5. In terms of biological role, catalyzes the interconversion of 2-phosphoglycerate and 3-phosphoglycerate. The sequence is that of 2,3-bisphosphoglycerate-independent phosphoglycerate mutase from Colwellia psychrerythraea (strain 34H / ATCC BAA-681) (Vibrio psychroerythus).